Reading from the N-terminus, the 138-residue chain is MSEFTIVQNKEDLIDAIKSKLSEGYKESEMTVISKTKLHIDALHDSEVNLTATSGSFSDKMAKILTGEDGEEAVLAHYKLPEEELERYKKEILNDNYLVVATKDTTSHVEADKANVAFETNQTKSNSHYSEETNGPKS.

The interval 115–138 (NVAFETNQTKSNSHYSEETNGPKS) is disordered. Polar residues predominate over residues 118-138 (FETNQTKSNSHYSEETNGPKS).

It belongs to the UPF0355 family.

The sequence is that of UPF0355 protein SSP2326 from Staphylococcus saprophyticus subsp. saprophyticus (strain ATCC 15305 / DSM 20229 / NCIMB 8711 / NCTC 7292 / S-41).